The chain runs to 237 residues: tRNA1(Val) (adenine(37)-N6)-methyltransferase (237 aa).

It belongs to the methyltransferase superfamily. tRNA (adenine-N(6)-)-methyltransferase family.

The protein localises to the cytoplasm. The enzyme catalyses adenosine(37) in tRNA1(Val) + S-adenosyl-L-methionine = N(6)-methyladenosine(37) in tRNA1(Val) + S-adenosyl-L-homocysteine + H(+). Functionally, specifically methylates the adenine in position 37 of tRNA(1)(Val) (anticodon cmo5UAC). The protein is tRNA1(Val) (adenine(37)-N6)-methyltransferase of Bacteroides thetaiotaomicron (strain ATCC 29148 / DSM 2079 / JCM 5827 / CCUG 10774 / NCTC 10582 / VPI-5482 / E50).